The primary structure comprises 171 residues: Protein GrpE (171 aa).

Residues 1-22 (MNHEQPDIESQQSAADAAATAG) form a disordered region.

Belongs to the GrpE family. Homodimer.

It is found in the cytoplasm. In terms of biological role, participates actively in the response to hyperosmotic and heat shock by preventing the aggregation of stress-denatured proteins, in association with DnaK and GrpE. It is the nucleotide exchange factor for DnaK and may function as a thermosensor. Unfolded proteins bind initially to DnaJ; upon interaction with the DnaJ-bound protein, DnaK hydrolyzes its bound ATP, resulting in the formation of a stable complex. GrpE releases ADP from DnaK; ATP binding to DnaK triggers the release of the substrate protein, thus completing the reaction cycle. Several rounds of ATP-dependent interactions between DnaJ, DnaK and GrpE are required for fully efficient folding. This Stenotrophomonas maltophilia (strain K279a) protein is Protein GrpE.